The sequence spans 143 residues: Putative transcriptional regulatory protein PH0763 (143 aa).

This sequence belongs to the Tfx family.

In terms of biological role, putative transcriptional regulator. This is Putative transcriptional regulatory protein PH0763 from Pyrococcus horikoshii (strain ATCC 700860 / DSM 12428 / JCM 9974 / NBRC 100139 / OT-3).